A 540-amino-acid polypeptide reads, in one-letter code: Peptide chain release factor 3 (540 aa).

The 270-residue stretch at 14–283 (NQRRNFAIIS…AFLDYALKPI (270 aa)) folds into the tr-type G domain. GTP-binding positions include 23–30 (SHPDAGKT), 91–95 (DTPGH), and 145–148 (NKLD).

It belongs to the TRAFAC class translation factor GTPase superfamily. Classic translation factor GTPase family. PrfC subfamily.

It localises to the cytoplasm. Its function is as follows. Increases the formation of ribosomal termination complexes and stimulates activities of RF-1 and RF-2. It binds guanine nucleotides and has strong preference for UGA stop codons. It may interact directly with the ribosome. The stimulation of RF-1 and RF-2 is significantly reduced by GTP and GDP, but not by GMP. The polypeptide is Peptide chain release factor 3 (Gloeothece citriformis (strain PCC 7424) (Cyanothece sp. (strain PCC 7424))).